The following is a 174-amino-acid chain: Xanthine-guanine phosphoribosyltransferase (174 aa).

5-phospho-alpha-D-ribose 1-diphosphate-binding positions include 49–50 (RG) and 108–116 (DDLVDTGAT). Aspartate 109 provides a ligand contact to Mg(2+). The guanine site is built by aspartate 112 and isoleucine 155. Xanthine-binding residues include aspartate 112 and isoleucine 155. GMP-binding positions include 112-116 (DTGAT) and 154-155 (WI).

This sequence belongs to the purine/pyrimidine phosphoribosyltransferase family. XGPT subfamily. In terms of assembly, homotetramer. Requires Mg(2+) as cofactor.

It localises to the cell inner membrane. The enzyme catalyses GMP + diphosphate = guanine + 5-phospho-alpha-D-ribose 1-diphosphate. The catalysed reaction is XMP + diphosphate = xanthine + 5-phospho-alpha-D-ribose 1-diphosphate. It carries out the reaction IMP + diphosphate = hypoxanthine + 5-phospho-alpha-D-ribose 1-diphosphate. It functions in the pathway purine metabolism; GMP biosynthesis via salvage pathway; GMP from guanine: step 1/1. The protein operates within purine metabolism; XMP biosynthesis via salvage pathway; XMP from xanthine: step 1/1. In terms of biological role, purine salvage pathway enzyme that catalyzes the transfer of the ribosyl-5-phosphate group from 5-phospho-alpha-D-ribose 1-diphosphate (PRPP) to the N9 position of the 6-oxopurines guanine and xanthine to form the corresponding ribonucleotides GMP (guanosine 5'-monophosphate) and XMP (xanthosine 5'-monophosphate), with the release of PPi. To a lesser extent, also acts on hypoxanthine. In Rhodopseudomonas palustris (strain BisB18), this protein is Xanthine-guanine phosphoribosyltransferase.